The following is a 281-amino-acid chain: Small ribosomal subunit protein uS2 (281 aa).

It belongs to the universal ribosomal protein uS2 family.

In Chlamydia muridarum (strain MoPn / Nigg), this protein is Small ribosomal subunit protein uS2 (rpsB).